The sequence spans 216 residues: MOB kinase activator 3C (216 aa).

Positions 82, 87, 164, and 169 each coordinate Zn(2+).

This sequence belongs to the MOB1/phocein family.

In terms of biological role, may regulate the activity of kinases. In Mus musculus (Mouse), this protein is MOB kinase activator 3C (Mob3c).